Reading from the N-terminus, the 69-residue chain is Large ribosomal subunit protein bL31 (69 aa).

The Zn(2+) site is built by Cys-16, Cys-18, Cys-38, and Cys-41.

The protein belongs to the bacterial ribosomal protein bL31 family. Type A subfamily. Part of the 50S ribosomal subunit. Requires Zn(2+) as cofactor.

In terms of biological role, binds the 23S rRNA. The polypeptide is Large ribosomal subunit protein bL31 (Cutibacterium acnes (strain DSM 16379 / KPA171202) (Propionibacterium acnes)).